The primary structure comprises 353 residues: UPF0283 membrane protein YPTS_2342 (353 aa).

3 helical membrane passes run 71-91 (MVTAGMVILGASVIAQSVQWV), 101-121 (IALGATTAGGLIILAGVGSVV), and 214-234 (ESALMIAVSPLALVDMAFIAW).

It belongs to the UPF0283 family.

The protein localises to the cell inner membrane. The polypeptide is UPF0283 membrane protein YPTS_2342 (Yersinia pseudotuberculosis serotype IB (strain PB1/+)).